Consider the following 284-residue polypeptide: NAD kinase (284 aa).

Asp-70 acts as the Proton acceptor in catalysis. NAD(+)-binding positions include 70-71 (DG), 139-140 (NE), Lys-167, Asp-169, Leu-177, 180-185 (TAYNLS), and Gln-236.

It belongs to the NAD kinase family. The cofactor is a divalent metal cation.

The protein localises to the cytoplasm. The enzyme catalyses NAD(+) + ATP = ADP + NADP(+) + H(+). Involved in the regulation of the intracellular balance of NAD and NADP, and is a key enzyme in the biosynthesis of NADP. Catalyzes specifically the phosphorylation on 2'-hydroxyl of the adenosine moiety of NAD to yield NADP. The chain is NAD kinase from Helicobacter pylori (strain Shi470).